An 84-amino-acid chain; its full sequence is Small ribosomal subunit protein uS15 (84 aa).

The protein belongs to the universal ribosomal protein uS15 family. Part of the 30S ribosomal subunit. Forms a bridge to the 50S subunit in the 70S ribosome, contacting the 23S rRNA.

Functionally, one of the primary rRNA binding proteins, it binds directly to 16S rRNA where it helps nucleate assembly of the platform of the 30S subunit by binding and bridging several RNA helices of the 16S rRNA. Its function is as follows. Forms an intersubunit bridge (bridge B4) with the 23S rRNA of the 50S subunit in the ribosome. This Thermosipho africanus (strain TCF52B) protein is Small ribosomal subunit protein uS15.